The sequence spans 273 residues: 1,4-dihydroxy-2-naphthoyl-CoA synthase (273 aa).

Substrate is bound by residues Arg34, 73 to 77 (SGGDQ), Tyr85, 117 to 121 (YAVGG), Thr143, Ser149, Tyr246, and Lys261. 142 to 144 (QTG) is a hydrogencarbonate binding site. The segment covering 254 to 265 (GRDAFKEKRDPD) has biased composition (basic and acidic residues). Residues 254-273 (GRDAFKEKRDPDFDQFPKFP) form a disordered region.

It belongs to the enoyl-CoA hydratase/isomerase family. MenB subfamily. The cofactor is hydrogencarbonate.

It catalyses the reaction 2-succinylbenzoyl-CoA + H(+) = 1,4-dihydroxy-2-naphthoyl-CoA + H2O. It functions in the pathway quinol/quinone metabolism; 1,4-dihydroxy-2-naphthoate biosynthesis; 1,4-dihydroxy-2-naphthoate from chorismate: step 6/7. The protein operates within quinol/quinone metabolism; menaquinone biosynthesis. Converts o-succinylbenzoyl-CoA (OSB-CoA) to 1,4-dihydroxy-2-naphthoyl-CoA (DHNA-CoA). In Staphylococcus aureus (strain MRSA252), this protein is 1,4-dihydroxy-2-naphthoyl-CoA synthase.